A 366-amino-acid polypeptide reads, in one-letter code: Ribosomal RNA large subunit methyltransferase M (366 aa).

S-adenosyl-L-methionine contacts are provided by residues serine 188, 221–224 (CPGG), aspartate 240, aspartate 260, and aspartate 277. Lysine 306 (proton acceptor) is an active-site residue.

Belongs to the class I-like SAM-binding methyltransferase superfamily. RNA methyltransferase RlmE family. RlmM subfamily. In terms of assembly, monomer.

The protein resides in the cytoplasm. It carries out the reaction cytidine(2498) in 23S rRNA + S-adenosyl-L-methionine = 2'-O-methylcytidine(2498) in 23S rRNA + S-adenosyl-L-homocysteine + H(+). In terms of biological role, catalyzes the 2'-O-methylation at nucleotide C2498 in 23S rRNA. The chain is Ribosomal RNA large subunit methyltransferase M from Musicola paradisiaca (strain Ech703) (Dickeya paradisiaca).